A 136-amino-acid polypeptide reads, in one-letter code: Large ribosomal subunit protein uL16 (136 aa).

It belongs to the universal ribosomal protein uL16 family. As to quaternary structure, part of the 50S ribosomal subunit.

Its function is as follows. Binds 23S rRNA and is also seen to make contacts with the A and possibly P site tRNAs. The protein is Large ribosomal subunit protein uL16 of Buchnera aphidicola subsp. Baizongia pistaciae (strain Bp).